Reading from the N-terminus, the 354-residue chain is Anthranilate phosphoribosyltransferase (354 aa).

The protein belongs to the anthranilate phosphoribosyltransferase family.

It catalyses the reaction N-(5-phospho-beta-D-ribosyl)anthranilate + diphosphate = 5-phospho-alpha-D-ribose 1-diphosphate + anthranilate. Its pathway is amino-acid biosynthesis; L-tryptophan biosynthesis; L-tryptophan from chorismate: step 2/5. In Schizosaccharomyces pombe (strain 972 / ATCC 24843) (Fission yeast), this protein is Anthranilate phosphoribosyltransferase (trp4).